The chain runs to 452 residues: 1-aminocyclopropane-1-carboxylate synthase 3 (452 aa).

Lys-283 carries the N6-(pyridoxal phosphate)lysine modification.

It belongs to the class-I pyridoxal-phosphate-dependent aminotransferase family. Requires pyridoxal 5'-phosphate as cofactor. Expressed in leaves. Expressed in roots and leaf blades. Expressed at low levels in leaf sheaths and shoot bases.

It carries out the reaction S-adenosyl-L-methionine = 1-aminocyclopropane-1-carboxylate + S-methyl-5'-thioadenosine + H(+). The protein operates within alkene biosynthesis; ethylene biosynthesis via S-adenosyl-L-methionine; ethylene from S-adenosyl-L-methionine: step 1/2. Functionally, catalyzes the formation of 1-aminocyclopropane-1-carboxylate, a direct precursor of ethylene in higher plants. The protein is 1-aminocyclopropane-1-carboxylate synthase 3 of Oryza sativa subsp. japonica (Rice).